The chain runs to 34 residues: Potassium channel toxin alpha-KTx 6.2 (34 aa).

4 cysteine pairs are disulfide-bonded: Cys-3–Cys-24, Cys-9–Cys-29, Cys-13–Cys-19, and Cys-31–Cys-34. Cys-34 carries the cysteine amide modification.

This sequence belongs to the short scorpion toxin superfamily. Potassium channel inhibitor family. Alpha-KTx 06 subfamily. Expressed by the venom gland.

The protein resides in the secreted. In terms of biological role, blocks voltage-gated potassium channels Kv1.2/KCNA2 (IC(50)=0.12-0.8 nM), KCa3.1/KCNN4 (IC(50)=1-2.2 nM), Shaker B (IC(50)=2.39-80 nM), Kv1.1/KCNA1 (IC(50)=37-45 or no activity, depending on the study), Kv1.3/KCNA3 (IC(50)=150-180 or no activity, depending on the study). This chain is Potassium channel toxin alpha-KTx 6.2, found in Scorpio palmatus (Israeli golden scorpion).